The sequence spans 571 residues: Urease subunit alpha (571 aa).

A Urease domain is found at 134–571 (GAIDTHIHFI…LPMAQRYFLF (438 aa)). His139, His141, and Lys222 together coordinate Ni(2+). Lys222 is modified (N6-carboxylysine). Residue His224 participates in substrate binding. Positions 251 and 277 each coordinate Ni(2+). His325 serves as the catalytic Proton donor. Position 365 (Asp365) interacts with Ni(2+).

It belongs to the metallo-dependent hydrolases superfamily. Urease alpha subunit family. In terms of assembly, heterotrimer of UreA (gamma), UreB (beta) and UreC (alpha) subunits. Three heterotrimers associate to form the active enzyme. Ni cation serves as cofactor. In terms of processing, carboxylation allows a single lysine to coordinate two nickel ions.

The protein localises to the cytoplasm. It carries out the reaction urea + 2 H2O + H(+) = hydrogencarbonate + 2 NH4(+). The protein operates within nitrogen metabolism; urea degradation; CO(2) and NH(3) from urea (urease route): step 1/1. In Bordetella parapertussis (strain 12822 / ATCC BAA-587 / NCTC 13253), this protein is Urease subunit alpha.